A 460-amino-acid chain; its full sequence is Inner membrane symporter YicJ (460 aa).

At 1–11 (MKSEVLSVKEK) the chain is on the periplasmic side. 2 helical membrane passes run 12 to 32 (IGYGMGDAASHIIFDNVMLYM) and 33 to 53 (MFFYTDIFGIPAGFVGTMFLV). Residues 54–80 (ARALDAISDPCMGLLADRTRSRWGKFR) lie on the Periplasmic side of the membrane. The helical transmembrane segment at 81 to 101 (PWVLFGALPFGIVCVLAYSTP) threads the bilayer. The Cytoplasmic segment spans residues 102 to 116 (DLSMNGKMIYAAITY). A helical transmembrane segment spans residues 117–137 (TLLTLLYTVVNIPYCALGGVI). Residues 138-152 (TNDPTQRISLQSWRF) are Periplasmic-facing. The chain crosses the membrane as a helical span at residues 153-173 (VLATAGGMLSTVLMMPLVNLI). Residues 174–181 (GGDNKPLG) lie on the Cytoplasmic side of the membrane. Residues 182-202 (FQGGIAVLSVVAFMMLAFCFF) traverse the membrane as a helical segment. Over 203-248 (TTKERVEAPPTTTSMREDLRDIWQNDQWRIVGLLTIFNILAVCVRG) the chain is Periplasmic. The helical transmembrane segment at 249–269 (GAMMYYVTWILGTPEVFVAFL) threads the bilayer. Topologically, residues 270-288 (TTYCVGNLIGSALAKPLTD) are cytoplasmic. A helical membrane pass occupies residues 289–309 (WKCKVTIFWWTNALLAVISLA). Methionine 310 is a topological domain (periplasmic). Residues 311–331 (FFVPMQASITMFVFIFVIGVL) form a helical membrane-spanning segment. At 332–366 (HQLVTPIQWVMMSDTVDYGEWCNGKRLTGISFAGT) the chain is on the cytoplasmic side. Residues 367 to 387 (LFVLKLGLAFGGALIGWMLAY) form a helical membrane-spanning segment. The Periplasmic portion of the chain corresponds to 388 to 403 (GGYDAAEKAQNSATIS). Residues 404-424 (IIIALFTIVPAICYLLSAIIA) form a helical membrane-spanning segment. The Cytoplasmic segment spans residues 425–460 (KRYYSLTTHNLKTVMEQLAQGKRRCQQQFTSQEVQN).

This sequence belongs to the sodium:galactoside symporter (TC 2.A.2) family.

It localises to the cell inner membrane. This is Inner membrane symporter YicJ (yicJ) from Escherichia coli (strain K12).